A 435-amino-acid chain; its full sequence is MNEVPEPSPELLQRAGAVRRAAVDLGMADDGQRMQALQAMADALAERSDALVAANREDLDRSASEGLAPALLARLKLDAAKLEGAIDGVRKVASLKDPLGRRDLHRELDQGLTLERVTVPLGVLGVIFEARPDAVIQIASLAIRSGNGALLKGGSEARCTNEAVMEALKAGLASSAVSPDALALLTTRQESLALLKLDGLVDLIIPRGSNELVRFIQDNTRIPVLGHADGICHLYVDAAADLDKAVRVALDSKTQYPAACNAIETLLVHRSVAASFLSAAIPAFRDAGVVLRGDAASVALGVPESATEADWRTEYLDLTLAVKVVDDLAAAADHIRRFGSRHTECIVTEDAAAADRFLSSIDSAGVYHNCSTRFADGFRYGFGAEVGISTQTLPPRGPVGLEGLVTYRYRLRGDGHVAADYASGASRFTHNDLSL.

Belongs to the gamma-glutamyl phosphate reductase family.

Its subcellular location is the cytoplasm. It catalyses the reaction L-glutamate 5-semialdehyde + phosphate + NADP(+) = L-glutamyl 5-phosphate + NADPH + H(+). It participates in amino-acid biosynthesis; L-proline biosynthesis; L-glutamate 5-semialdehyde from L-glutamate: step 2/2. Its function is as follows. Catalyzes the NADPH-dependent reduction of L-glutamate 5-phosphate into L-glutamate 5-semialdehyde and phosphate. The product spontaneously undergoes cyclization to form 1-pyrroline-5-carboxylate. This is Gamma-glutamyl phosphate reductase from Synechococcus sp. (strain WH7803).